The following is a 205-amino-acid chain: Protein GrpE (205 aa).

The segment at 1 to 40 is disordered; the sequence is MSRKLHEEELTPEGMDAAQNADPAGDPVSENEGALPAAEP.

It belongs to the GrpE family. Homodimer.

The protein localises to the cytoplasm. In terms of biological role, participates actively in the response to hyperosmotic and heat shock by preventing the aggregation of stress-denatured proteins, in association with DnaK and GrpE. It is the nucleotide exchange factor for DnaK and may function as a thermosensor. Unfolded proteins bind initially to DnaJ; upon interaction with the DnaJ-bound protein, DnaK hydrolyzes its bound ATP, resulting in the formation of a stable complex. GrpE releases ADP from DnaK; ATP binding to DnaK triggers the release of the substrate protein, thus completing the reaction cycle. Several rounds of ATP-dependent interactions between DnaJ, DnaK and GrpE are required for fully efficient folding. This is Protein GrpE from Acidobacterium capsulatum (strain ATCC 51196 / DSM 11244 / BCRC 80197 / JCM 7670 / NBRC 15755 / NCIMB 13165 / 161).